The following is a 309-amino-acid chain: Sulfate adenylyltransferase subunit 2 (309 aa).

The protein belongs to the PAPS reductase family. CysD subfamily. In terms of assembly, heterodimer composed of CysD, the smaller subunit, and CysN.

It carries out the reaction sulfate + ATP + H(+) = adenosine 5'-phosphosulfate + diphosphate. The protein operates within sulfur metabolism; hydrogen sulfide biosynthesis; sulfite from sulfate: step 1/3. Functionally, with CysN forms the ATP sulfurylase (ATPS) that catalyzes the adenylation of sulfate producing adenosine 5'-phosphosulfate (APS) and diphosphate, the first enzymatic step in sulfur assimilation pathway. APS synthesis involves the formation of a high-energy phosphoric-sulfuric acid anhydride bond driven by GTP hydrolysis by CysN coupled to ATP hydrolysis by CysD. The sequence is that of Sulfate adenylyltransferase subunit 2 from Mycobacterium bovis (strain ATCC BAA-935 / AF2122/97).